The following is a 378-amino-acid chain: MSASDNNNSLEQKFAPLKNDRLLRALRFEPIDTTPVWMMRQAGRYLPEYKATRAEAGDFMSLCKDTARATEVTLQPLRRYDLDAAILFSDILTIPDAMGLGLYFEAGEGPKFKHPIRQQADLDRLPVLDVNDSLDYVMRAVTSIRTALNGQVPLFGFSGSPWTLATYMIEGGSSKDYRYTKGFLYSNPDFLHQLLDKLATSVIDYLDAQVVAGAQILQIFDSWGGALGHRQFIDFSHAYNKRIVAELKVRHPEIPVVLFTKGGGLWLDIQADSEADALGLDWTMPIDRARQVLTESQRQLTKHHKKLQSSKAIQGNLDPATLYGSPATIRAEVNAMLDSAYANGEKTGYVANLGHGITQWVNPDNAKVFIDAVHDYKI.

Residues 40–44, Asp-90, Tyr-167, Ser-222, and His-355 contribute to the substrate site; that span reads RQAGR.

Belongs to the uroporphyrinogen decarboxylase family. Homodimer.

The protein localises to the cytoplasm. It carries out the reaction uroporphyrinogen III + 4 H(+) = coproporphyrinogen III + 4 CO2. Its pathway is porphyrin-containing compound metabolism; protoporphyrin-IX biosynthesis; coproporphyrinogen-III from 5-aminolevulinate: step 4/4. Functionally, catalyzes the decarboxylation of four acetate groups of uroporphyrinogen-III to yield coproporphyrinogen-III. The protein is Uroporphyrinogen decarboxylase of Psychrobacter cryohalolentis (strain ATCC BAA-1226 / DSM 17306 / VKM B-2378 / K5).